Reading from the N-terminus, the 326-residue chain is tRNA-modifying protein YgfZ (326 aa).

Residues Trp-27 and Trp-189 each coordinate folate.

Belongs to the tRNA-modifying YgfZ family.

It localises to the cytoplasm. Its function is as follows. Folate-binding protein involved in regulating the level of ATP-DnaA and in the modification of some tRNAs. It is probably a key factor in regulatory networks that act via tRNA modification, such as initiation of chromosomal replication. The polypeptide is tRNA-modifying protein YgfZ (Shigella sonnei (strain Ss046)).